A 400-amino-acid chain; its full sequence is Lysophospholipid transporter LplT (400 aa).

The next 12 helical transmembrane spans lie at 19–39 (VIVAQFLSAFGDNALLFATLA), 53–73 (VLQMVFVGAYILFAPFVGQMA), 91–111 (AGAAGICLGVNPFVGYTLVGI), 139–159 (LMEASTIAAILLGSVAGGVLA), 164–184 (IAALVACALAYAGAVAANLFI), 195–213 (SWRLSAMTRSFFSACVVLW), 227–247 (LFWGAGVTLRFLLVLWVPVAL), 257–277 (YLNAMVAVGIVVGAGAAAKLV), 281–301 (TVSRCMPAGILIGVVVAIFSL), 304–324 (ALLPAYALLLLIGMLGGFFVV), 352–372 (NSAMLLMLGLYSLAVLVGVPA), and 373–393 (VAIGIGFGVLFALAIAALWIW).

This sequence belongs to the major facilitator superfamily. LplT (TC 2.A.1.42) family.

Its subcellular location is the cell inner membrane. In terms of biological role, catalyzes the facilitated diffusion of 2-acyl-glycero-3-phosphoethanolamine (2-acyl-GPE) into the cell. This Salmonella enteritidis PT4 (strain P125109) protein is Lysophospholipid transporter LplT.